A 310-amino-acid polypeptide reads, in one-letter code: tRNA dimethylallyltransferase (310 aa).

An ATP-binding site is contributed by 11-18 (GPTAVGKT). Residue 13–18 (TAVGKT) participates in substrate binding. Residues 36–39 (DSMQ) form an interaction with substrate tRNA region.

Belongs to the IPP transferase family. In terms of assembly, monomer. Mg(2+) serves as cofactor.

The catalysed reaction is adenosine(37) in tRNA + dimethylallyl diphosphate = N(6)-dimethylallyladenosine(37) in tRNA + diphosphate. In terms of biological role, catalyzes the transfer of a dimethylallyl group onto the adenine at position 37 in tRNAs that read codons beginning with uridine, leading to the formation of N6-(dimethylallyl)adenosine (i(6)A). In Shouchella clausii (strain KSM-K16) (Alkalihalobacillus clausii), this protein is tRNA dimethylallyltransferase.